The chain runs to 247 residues: Segregation and condensation protein A (247 aa).

The protein belongs to the ScpA family. As to quaternary structure, component of a cohesin-like complex composed of ScpA, ScpB and the Smc homodimer, in which ScpA and ScpB bind to the head domain of Smc. The presence of the three proteins is required for the association of the complex with DNA.

It is found in the cytoplasm. Participates in chromosomal partition during cell division. May act via the formation of a condensin-like complex containing Smc and ScpB that pull DNA away from mid-cell into both cell halves. The polypeptide is Segregation and condensation protein A (Lactobacillus johnsonii (strain CNCM I-12250 / La1 / NCC 533)).